A 295-amino-acid chain; its full sequence is Polyisoprenoid diphosphate/phosphate phosphohydrolase PLPP6 (295 aa).

2 disordered regions span residues 1-39 and 61-90; these read MPSP…SRFE and SESP…PEED. At 1–132 the chain is on the cytoplasmic side; that stretch reads MPSPRRSMEG…ESSSWGSVRP (132 aa). Positions 16–27 are enriched in low complexity; it reads SASSSSSSPGSP. Ser26, Ser36, and Ser70 each carry phosphoserine. A helical membrane pass occupies residues 133–153; sequence LMKLLEISGHGIPWLLGTLYC. Over 154-164 the chain is Lumenal; the sequence is LCRSDSWAGRE. Residues 165–185 traverse the membrane as a helical segment; that stretch reads VLMNLLFALLLDLLLVALIKG. Residues 184–192 form a phosphatase sequence motif I region; that stretch reads KGLVRRRRP. Topologically, residues 186-228 are cytoplasmic; it reads LVRRRRPAHNQMDMFVTLSVDKYSFPSGHATRAALMSRFILNH. Positions 211–214 are phosphatase sequence motif II; it reads PSGH. His214 (proton donors) is an active-site residue. The helical transmembrane segment at 229–249 threads the bilayer; sequence LVLAIPLRVLVVLWAFVLGLS. Residues 249 to 260 are phosphatase sequence motif III; it reads SRVMLGRHNVTD. The Lumenal segment spans residues 250-260; that stretch reads RVMLGRHNVTD. Catalysis depends on His256, which acts as the Nucleophile. Residues 261–281 form a helical membrane-spanning segment; that stretch reads VAFGFFLGYMQYSIVDYCWLS. Residues 282 to 295 are Cytoplasmic-facing; sequence PHNAPVLFLLWSQR.

Belongs to the PA-phosphatase related phosphoesterase family. Post-translationally, phosphorylation by PKC activates the phosphatase activity towards presqualene diphosphate. Widely expressed. Expressed in most organs, in particular gastrointestinal organs, spleen, placenta, kidney, thymus and brain.

The protein resides in the endoplasmic reticulum membrane. The protein localises to the nucleus envelope. Its subcellular location is the nucleus inner membrane. The catalysed reaction is presqualene diphosphate + H2O = presqualene phosphate + phosphate + H(+). The enzyme catalyses presqualene phosphate + H2O = presqualene alcohol + phosphate. It catalyses the reaction (2E,6E)-farnesyl diphosphate + H2O = (2E,6E)-farnesyl phosphate + phosphate + H(+). It carries out the reaction (2E,6E)-farnesyl phosphate + H2O = (2E,6E)-farnesol + phosphate. The catalysed reaction is (2E,6E,10E)-geranylgeranyl diphosphate + H2O = (2E,6E,10E)-geranylgeranyl phosphate + phosphate + H(+). The enzyme catalyses (2E,6E,10E)-geranylgeranyl phosphate + H2O = (2E,6E,10E)-geranylgeraniol + phosphate. It catalyses the reaction (2E)-geranyl diphosphate + H2O = (2E)-geranyl phosphate + phosphate + H(+). It carries out the reaction (2E)-geranyl phosphate + H2O = (2E)-geraniol + phosphate. The catalysed reaction is 1,2-dihexadecanoyl-sn-glycero-3-phosphate + H2O = 1,2-dihexadecanoyl-sn-glycerol + phosphate. Inhibited by propranolol. Not inhibited by N-ethylmaleimide or bromoenolactome. Its function is as follows. Magnesium-independent polyisoprenoid diphosphatase that catalyzes the sequential dephosphorylation of presqualene, farnesyl, geranyl and geranylgeranyl diphosphates. Functions in the innate immune response through the dephosphorylation of presqualene diphosphate which acts as a potent inhibitor of the signaling pathways contributing to polymorphonuclear neutrophils activation. May regulate the biosynthesis of cholesterol and related sterols by dephosphorylating presqualene and farnesyl diphosphate, two key intermediates in this biosynthetic pathway. May also play a role in protein prenylation by acting on farnesyl diphosphate and its derivative geranylgeranyl diphosphate, two precursors for the addition of isoprenoid anchors to membrane proteins. Has a lower activity towards phosphatidic acid (PA), but through phosphatidic acid dephosphorylation may participate in the biosynthesis of phospholipids and triacylglycerols. May also act on ceramide-1-P, lysophosphatidic acid (LPA) and sphing-4-enine 1-phosphate/sphingosine-1-phosphate. The protein is Polyisoprenoid diphosphate/phosphate phosphohydrolase PLPP6 of Homo sapiens (Human).